The primary structure comprises 103 residues: Large ribosomal subunit protein bL21 (103 aa).

Belongs to the bacterial ribosomal protein bL21 family. Part of the 50S ribosomal subunit. Contacts protein L20.

Its function is as follows. This protein binds to 23S rRNA in the presence of protein L20. In Shewanella pealeana (strain ATCC 700345 / ANG-SQ1), this protein is Large ribosomal subunit protein bL21.